The sequence spans 623 residues: Transketolase (623 aa).

Met1 is modified (N-acetylmethionine). An N6-acetyllysine mark is found at Lys6 and Lys11. His37 is a binding site for substrate. Residues Ser40 and His77 each coordinate thiamine diphosphate. Position 104 is a phosphoserine (Ser104). Thiamine diphosphate is bound at residue Gly123–Leu125. Lys144 is modified (N6-acetyllysine). Asp155 serves as a coordination point for Mg(2+). 2 residues coordinate thiamine diphosphate: Gly156 and Asn185. Mg(2+)-binding residues include Asn185 and Leu187. Residues Lys204, Lys232, and Lys241 each carry the N6-acetyllysine modification. 2 residues coordinate thiamine diphosphate: Lys244 and His258. His258 serves as a coordination point for substrate. Position 260 is an N6-acetyllysine (Lys260). The residue at position 275 (Tyr275) is a Phosphotyrosine. Position 287 is a phosphothreonine (Thr287). Ser295 carries the post-translational modification Phosphoserine. Residue Arg318 coordinates substrate. Lys352 is covalently cross-linked (Glycyl lysine isopeptide (Lys-Gly) (interchain with G-Cter in SUMO2)). The Proton donor role is filled by Glu366. A thiamine diphosphate-binding site is contributed by Phe392. Substrate is bound by residues His416 and Asp424. Gln428 contributes to the thiamine diphosphate binding site. Residue Arg474 coordinates substrate. Residues Lys538 and Lys603 each carry the N6-acetyllysine modification.

The protein belongs to the transketolase family. As to quaternary structure, homodimer. Mg(2+) is required as a cofactor. It depends on Ca(2+) as a cofactor. Mn(2+) serves as cofactor. Requires Co(2+) as cofactor. The cofactor is thiamine diphosphate.

It catalyses the reaction D-sedoheptulose 7-phosphate + D-glyceraldehyde 3-phosphate = aldehydo-D-ribose 5-phosphate + D-xylulose 5-phosphate. Catalyzes the transfer of a two-carbon ketol group from a ketose donor to an aldose acceptor, via a covalent intermediate with the cofactor thiamine pyrophosphate. This Pongo abelii (Sumatran orangutan) protein is Transketolase (TKT).